We begin with the raw amino-acid sequence, 859 residues long: ATP-dependent DNA helicase PIF1 (859 aa).

Residues 1–45 constitute a mitochondrion transit peptide; it reads MPKWIRSTLNHIIPRRPFICSFNSFLLLKNVSHAKLSFSMSSRGF. Phosphoserine is present on residues Ser70 and Ser72. The span at 142 to 157 shows a compositional bias: polar residues; sequence NSFDQSSQKKSRSTGF. Residues 142–183 are disordered; it reads NSFDQSSQKKSRSTGFKNPLRPALKKESSFDELQNSSISQER. A Phosphoserine modification is found at Ser169. The segment covering 172–182 has biased composition (polar residues); it reads DELQNSSISQE. 258–265 contacts ATP; it reads GSAGTGKS. Ser584 bears the Phosphoserine mark. A DNA-binding region spans residues 727 to 746; it reads QAYVALSRAVSREGLQVLNF. Positions 782–859 are disordered; the sequence is KRKLDYAPGP…GQDTEDHILE (78 aa). Over residues 800-809 the composition is skewed to low complexity; it reads KSNSPAPISA. Basic and acidic residues predominate over residues 844 to 859; sequence VSDEPRGQDTEDHILE.

Belongs to the helicase family. PIF1 subfamily. As to quaternary structure, monomer in solution. DNA binding induces dimerization. Associates with mitochondrial and telomeric DNA. Binding to mtDNA is non-specific and the protein seems to coat the entire mtDNA molecule. Binds to the telomerase RNA TLC1. Interacts with the mitochondrial single-strand DNA-binding protein RIM1. Requires Mg(2+) as cofactor. The cofactor is Mn(2+). Phosphorylated. Undergoes RAD53-dependent phosphorylation in response to loss of mtDNA.

It is found in the nucleus. The protein localises to the nucleolus. The protein resides in the mitochondrion inner membrane. It catalyses the reaction Couples ATP hydrolysis with the unwinding of duplex DNA at the replication fork by translocating in the 5'-3' direction. This creates two antiparallel DNA single strands (ssDNA). The leading ssDNA polymer is the template for DNA polymerase III holoenzyme which synthesizes a continuous strand.. It carries out the reaction ATP + H2O = ADP + phosphate + H(+). In terms of biological role, DNA-dependent ATPase and 5'-3' DNA helicase required for the maintenance of both mitochondrial and nuclear genome stability. Efficiently unwinds G-quadruplex (G4) DNA structures and forked RNA-DNA hybrids. Appears to move along DNA in single nucleotide or base pair steps, powered by hydrolysis of 1 molecule of ATP. Processes at an unwinding rate of about 75 bp/s. Resolves G4 structures, preventing replication pausing and double-strand breaks (DSBs) at G4 motifs. Involved in the maintenance of telomeric DNA. Inhibits telomere elongation, de novo telomere formation and telomere addition to DSBs via catalytic inhibition of telomerase. Reduces the processivity of telomerase by displacing active telomerase from DNA ends. Releases telomerase by unwinding the short telomerase RNA/telomeric DNA hybrid that is the intermediate in the telomerase reaction. Involved in the maintenance of ribosomal (rDNA). Required for efficient fork arrest at the replication fork barrier within rDNA. Involved in the maintenance of mitochondrial (mtDNA). Required to maintain mtDNA under conditions that introduce dsDNA breaks in mtDNA, either preventing or repairing dsDNA breaks. May inhibit replication progression to allow time for repair. May have a general role in chromosomal replication by affecting Okazaki fragment maturation. May have a role in conjunction with DNA2 helicase/nuclease in 5'-flap extension during Okazaki fragment processing. The polypeptide is ATP-dependent DNA helicase PIF1 (Saccharomyces cerevisiae (strain YJM789) (Baker's yeast)).